Reading from the N-terminus, the 78-residue chain is Esculentin-2Vb (78 aa).

The signal sequence occupies residues 1 to 22; that stretch reads MFTMKKSLLLLFFLGTISLSLC. The propeptide occupies 23–39; it reads EEERGADEEEGDGEKLM. C72 and C78 form a disulfide bridge.

Expressed by the skin glands.

The protein localises to the secreted. Functionally, antimicrobial peptide. The protein is Esculentin-2Vb of Odorrana versabilis (Chinese bamboo leaf odorous frog).